The sequence spans 675 residues: 1,4-alpha-glucan branching enzyme TK1436 (675 aa).

Glu183 (nucleophile) is an active-site residue. The substrate site is built by Arg261 and Gly278. The active-site Proton donor is Asp354. Substrate contacts are provided by Trp407, Asp467, and Gln476. Disordered regions lie at residues Pro537–Thr563 and Glu581–Lys627. Basic and acidic residues-rich tracts occupy residues Pro549–Thr563 and Glu581–Lys595. Over residues Arg596 to Pro616 the composition is skewed to basic residues.

This sequence belongs to the glycosyl hydrolase 57 family. In terms of assembly, monomer.

It catalyses the reaction Transfers a segment of a (1-&gt;4)-alpha-D-glucan chain to a primary hydroxy group in a similar glucan chain.. Its function is as follows. Catalyzes the formation of branch points in alpha-glucans by cleavage of an alpha-1,4 glycosidic bond and subsequent transfer of the cleaved-off oligosaccharide to a new alpha-1,6 position. The branch chain-length distribution of the reaction products shows degree of polymerization (DP) of 5 to 30, with two local maxima at DP 6 and DP 11. Exhibits an alpha-retaining catalytic mechanism. Does not display alpha-galactosidase or pullulanase activity, since melibiose and pullulan are not substrates. Is not able to catalyze the hydrolysis or transglycosylation of maltoheptaose, suggesting that the TK1436 protein contains neither alpha-amylase nor 4-alpha-glucanotransferase activity. The polypeptide is 1,4-alpha-glucan branching enzyme TK1436 (Thermococcus kodakarensis (strain ATCC BAA-918 / JCM 12380 / KOD1) (Pyrococcus kodakaraensis (strain KOD1))).